Here is a 339-residue protein sequence, read N- to C-terminus: Heat-inducible transcription repressor HrcA (339 aa).

It belongs to the HrcA family.

In terms of biological role, negative regulator of class I heat shock genes (grpE-dnaK-dnaJ and groELS operons). Prevents heat-shock induction of these operons. In Leifsonia xyli subsp. xyli (strain CTCB07), this protein is Heat-inducible transcription repressor HrcA.